Here is a 252-residue protein sequence, read N- to C-terminus: MTQPILQVSDLSVYYNKKKALKEVSMDFYPNEITALIGPSGSGKSTLLRAINRMGDLNPEVTLTGAVMYNGHNVYSPRTDTVELRKEIGMVFQQPNPFPMSVFENVVYGLRLKGIKDKATLDEAVETSLKGASIWDEVKDRLHDSALGLSGGQQQRVCIARTLATKPKIILLDEPTSALDPISAGKIEETLHGLKDQYTMLLVTRSMQQASRISDRTGFFLDGNLIEYGNTKEMFMNPKHKETEDYITGKFG.

The ABC transporter domain occupies 6-247 (LQVSDLSVYY…PKHKETEDYI (242 aa)). 38 to 45 (GPSGSGKS) serves as a coordination point for ATP.

This sequence belongs to the ABC transporter superfamily. Phosphate importer (TC 3.A.1.7) family. The complex is composed of two ATP-binding proteins (PstB), two transmembrane proteins (PstC and PstA) and a solute-binding protein (PstS).

The protein localises to the cell membrane. It carries out the reaction phosphate(out) + ATP + H2O = ADP + 2 phosphate(in) + H(+). Functionally, part of the ABC transporter complex PstSACB involved in phosphate import. Responsible for energy coupling to the transport system. The polypeptide is Phosphate import ATP-binding protein PstB 1 (Streptococcus agalactiae serotype Ia (strain ATCC 27591 / A909 / CDC SS700)).